Here is a 377-residue protein sequence, read N- to C-terminus: ATP-dependent (S)-NAD(P)H-hydrate dehydratase (377 aa).

The 357-residue stretch at 10-366 folds into the YjeF C-terminal domain; it reads LLHLSRQLIQ…EYLHESFTEL (357 aa). Residues glycine 148 and 201-207 each bind (6S)-NADPHX; that span reads NVVEFQR. ATP contacts are provided by residues 245–249 and 264–273; these read KGEHD and GSNKRVGGQG. Aspartate 274 is a binding site for (6S)-NADPHX.

The protein belongs to the NnrD/CARKD family. Mg(2+) is required as a cofactor.

The protein resides in the cytoplasm. The catalysed reaction is (6S)-NADHX + ATP = ADP + phosphate + NADH + H(+). It catalyses the reaction (6S)-NADPHX + ATP = ADP + phosphate + NADPH + H(+). Its function is as follows. Catalyzes the dehydration of the S-form of NAD(P)HX at the expense of ATP, which is converted to ADP. Together with NAD(P)HX epimerase, which catalyzes the epimerization of the S- and R-forms, the enzyme allows the repair of both epimers of NAD(P)HX, a damaged form of NAD(P)H that is a result of enzymatic or heat-dependent hydration. This is ATP-dependent (S)-NAD(P)H-hydrate dehydratase from Candida albicans (strain SC5314 / ATCC MYA-2876) (Yeast).